The primary structure comprises 220 residues: Fructose-6-phosphate aldolase (220 aa).

Lys85 functions as the Schiff-base intermediate with substrate in the catalytic mechanism.

This sequence belongs to the transaldolase family. Type 3A subfamily. As to quaternary structure, homodecamer.

The protein resides in the cytoplasm. It catalyses the reaction beta-D-fructose 6-phosphate = dihydroxyacetone + D-glyceraldehyde 3-phosphate. Functionally, catalyzes the reversible formation of fructose 6-phosphate from dihydroxyacetone and D-glyceraldehyde 3-phosphate via an aldolization reaction. This chain is Fructose-6-phosphate aldolase, found in Salmonella agona (strain SL483).